Consider the following 506-residue polypeptide: Nostrin (506 aa).

Residues 1-260 (MRDPLTDCSY…AISKVDVEKD (260 aa)) enclose the F-BAR domain. The residue at position 114 (Ser-114) is a Phosphoserine. Coiled-coil stretches lie at residues 160–230 (SLTQ…LNQY) and 305–334 (KLGR…ASSS). Residues 292-372 (PMDKERRKSL…SYKLSSVLAD (81 aa)) form the REM-1 domain. A disordered region spans residues 413-435 (KAESKAPAGGQNNPSSSPSGSTV). The span at 419-435 (PAGGQNNPSSSPSGSTV) shows a compositional bias: low complexity. The SH3 domain occupies 438–497 (ASKHLCKALYTFQARQDDELNLEKGDIVTVHEKKEEGWWFGSLKGKRGHFPAAYVEELPP). At Ser-479 the chain carries Phosphoserine.

Homotrimer. Interacts with NOS3, DNM2, WASL and CAV1. Interacts with DAB2. Interacts (via SH3 domain) with DNM2; this interaction allows the recruitment of NOS3 to dynamin-positive structures.

Its subcellular location is the cell membrane. It is found in the cytoplasmic vesicle. It localises to the cytoplasm. The protein resides in the cytoskeleton. The protein localises to the nucleus. Functionally, multivalent adapter protein which may decrease NOS3 activity by inducing its translocation away from the plasma membrane. The protein is Nostrin of Mus musculus (Mouse).